Here is a 744-residue protein sequence, read N- to C-terminus: Photosystem I P700 chlorophyll a apoprotein A2 (744 aa).

8 helical membrane-spanning segments follow: residues 48-71 (LFATHFGHLAIIFLWASGNVFHIA), 137-160 (LYAGAIGLLLLAAVFLFAGWLHLQ), 177-201 (LNHHLAGLFGVSSLAWTGHLVHVAI), 275-293 (MAHHHLAIAVIFIVAGHMY), 337-360 (LHFQLALALACLGVVTSLVAQHMY), 376-402 (AALYTHHQYIAGFLMVGAFAHGAIFLV), 424-446 (AIISHLSWVSLFLGFHTLGLYVH), and 527-545 (FLVHHAIALGLHTTTLILV). The [4Fe-4S] cluster site is built by Cys569 and Cys578. 2 consecutive transmembrane segments (helical) span residues 585–606 (AFYLAMFWMLNTIGWVTFYWHW) and 653–675 (LAVWAWMFLFGHLVWATGFMFLI). Positions 664, 672, and 680 each coordinate chlorophyll a. Position 681 (Trp681) interacts with phylloquinone. A helical transmembrane segment spans residues 717–737 (LVGLAHFTVGYVLTYAAFVIA).

This sequence belongs to the PsaA/PsaB family. As to quaternary structure, the PsaA/B heterodimer binds the P700 chlorophyll special pair and subsequent electron acceptors. PSI consists of a core antenna complex that captures photons, and an electron transfer chain that converts photonic excitation into a charge separation. The cyanobacterial PSI reaction center is composed of one copy each of PsaA,B,C,D,E,F,I,J,K,L,M and X, and forms trimeric complexes. It depends on PSI electron transfer chain: 5 chlorophyll a, 1 chlorophyll a', 2 phylloquinones and 3 4Fe-4S clusters. PSI core antenna: 90 chlorophyll a, 22 carotenoids, 3 phospholipids and 1 galactolipid. P700 is a chlorophyll a/chlorophyll a' dimer, A0 is one or more chlorophyll a, A1 is one or both phylloquinones and FX is a shared 4Fe-4S iron-sulfur center. as a cofactor.

It localises to the cellular thylakoid membrane. The enzyme catalyses reduced [plastocyanin] + hnu + oxidized [2Fe-2S]-[ferredoxin] = oxidized [plastocyanin] + reduced [2Fe-2S]-[ferredoxin]. Functionally, psaA and PsaB bind P700, the primary electron donor of photosystem I (PSI), as well as the electron acceptors A0, A1 and FX. PSI is a plastocyanin/cytochrome c6-ferredoxin oxidoreductase, converting photonic excitation into a charge separation, which transfers an electron from the donor P700 chlorophyll pair to the spectroscopically characterized acceptors A0, A1, FX, FA and FB in turn. Oxidized P700 is reduced on the lumenal side of the thylakoid membrane by plastocyanin or cytochrome c6. The sequence is that of Photosystem I P700 chlorophyll a apoprotein A2 from Synechococcus sp. (strain JA-2-3B'a(2-13)) (Cyanobacteria bacterium Yellowstone B-Prime).